Here is a 106-residue protein sequence, read N- to C-terminus: Putative double-stranded DNA mimic protein VP1949 (106 aa).

This sequence belongs to the putative dsDNA mimic protein family.

In terms of biological role, may act as a double-stranded DNA (dsDNA) mimic. Probably regulates the activity of a dsDNA-binding protein. The sequence is that of Putative double-stranded DNA mimic protein VP1949 from Vibrio parahaemolyticus serotype O3:K6 (strain RIMD 2210633).